Consider the following 184-residue polypeptide: ATP synthase subunit b (184 aa).

Residues 15-34 (VQPGLIFWTLVTFVIAAVVL) traverse the membrane as a helical segment.

It belongs to the ATPase B chain family. In terms of assembly, F-type ATPases have 2 components, F(1) - the catalytic core - and F(0) - the membrane proton channel. F(1) has five subunits: alpha(3), beta(3), gamma(1), delta(1), epsilon(1). F(0) has three main subunits: a(1), b(2) and c(10-14). The alpha and beta chains form an alternating ring which encloses part of the gamma chain. F(1) is attached to F(0) by a central stalk formed by the gamma and epsilon chains, while a peripheral stalk is formed by the delta and b chains.

The protein localises to the cell inner membrane. Functionally, f(1)F(0) ATP synthase produces ATP from ADP in the presence of a proton or sodium gradient. F-type ATPases consist of two structural domains, F(1) containing the extramembraneous catalytic core and F(0) containing the membrane proton channel, linked together by a central stalk and a peripheral stalk. During catalysis, ATP synthesis in the catalytic domain of F(1) is coupled via a rotary mechanism of the central stalk subunits to proton translocation. Component of the F(0) channel, it forms part of the peripheral stalk, linking F(1) to F(0). This chain is ATP synthase subunit b, found in Myxococcus xanthus (strain DK1622).